Reading from the N-terminus, the 683-residue chain is Putative boron transporter 5 (683 aa).

Residues 1–38 (MEEERVEGSKRPFQGIIRDVKGRALCYKQDWIAGLRSG) are Cytoplasmic-facing. The chain crosses the membrane as a helical span at residues 39-59 (FGILAPTTYVFFASALPVIAF). Residues 60–80 (GEQLSHDTERSLSTVETLAST) lie on the Extracellular side of the membrane. The helical transmembrane segment at 81-101 (ALCGVIHSLLGGQPLLILGVA) threads the bilayer. Residues 102 to 126 (EPTVLMYKYLYDFAKGRPELGKQLY) lie on the Cytoplasmic side of the membrane. A helical transmembrane segment spans residues 127 to 147 (LAWVAWVCVWTALLLFLMAIF). At 148-158 (NMAYIINRFTR) the chain is on the extracellular side. Residues 159–179 (IAGELFGMLIAVLFLQQTIKG) traverse the membrane as a helical segment. The Cytoplasmic portion of the chain corresponds to 180 to 200 (MVSEFRIPKGEDSKLEKYQFE). Residues 201 to 221 (WLYTNGLLGLIFTVGLVYTAL) form a helical membrane-spanning segment. Residues 222 to 238 (KSRKARSWPYGTGCCRS) are Extracellular-facing. The chain crosses the membrane as a helical span at residues 239–259 (FVADYGVPLMVVVWTALSFST). At 260-294 (PSKLPSGVPRRLVSPLPWDSVSLTHWTVIKDMGKV) the chain is on the cytoplasmic side. The chain crosses the membrane as a helical span at residues 295-315 (SPGYIFAAFIPALMIAGLYFF). Over 316 to 335 (DHSVVSQLAQQKEFNLKNPS) the chain is Extracellular. Residues 336-356 (AYHYDILLLGFMVLICGMLGL) form a helical membrane-spanning segment. Residues 357–477 (PPSNGVLPQS…EQRVSNLLQS (121 aa)) lie on the Cytoplasmic side of the membrane. Residues 478 to 498 (LLVIGAVFALPVIKLIPTSLL) form a helical membrane-spanning segment. Over 499–565 (WGYFAYMAID…QILYFGLCYG (67 aa)) the chain is Extracellular. The helical transmembrane segment at 566-586 (VTWIPVAGIMFPVLFFLLVAI) threads the bilayer. The Cytoplasmic portion of the chain corresponds to 587-683 (RQYLLPKLFK…GDGDMSSSRE (97 aa)).

Belongs to the anion exchanger (TC 2.A.31.3) family.

Its subcellular location is the membrane. In terms of biological role, putative boron transporter. Boron is essential for maintaining the integrity of plants cell walls. In Arabidopsis thaliana (Mouse-ear cress), this protein is Putative boron transporter 5 (BOR5).